Reading from the N-terminus, the 528-residue chain is Ankyrin repeat and death domain-containing protein 1B (528 aa).

ANK repeat units lie at residues Pro-67–Val-96, Met-100–Val-129, His-133–Ala-162, Asp-166–Gln-197, Lys-201–Glu-230, Gly-234–Glu-263, Leu-267–Gln-296, Pro-300–Ile-329, Lys-333–Ala-362, and Gln-366–Trp-395. Residues Thr-427 to Lys-515 enclose the Death domain.

The protein is Ankyrin repeat and death domain-containing protein 1B (ANKDD1B) of Homo sapiens (Human).